Reading from the N-terminus, the 265-residue chain is MGLRIHFVVDPHGWCCMGLIVFVWLYNIVLIPKIVLFPHYEEGHIPGILIIIFYGISIFCLVALVRASITDPGRLPENPKIPHGEREFWELCNKCNLMRPKRSHHCSRCGHCVRRMDHHCPWINNCVGEDNHWLFLQLCFYTELLTCYALMFSFCHYYYFLPLKKRNLDLFVFRHELAIMRLAAFMGITMLVGITGLFYTQLIGIITDTTSIEKMSNCCEDISRPRKPWQQTFSEVFGTRWKILWFIPFRQRQPLRVPYHFANHV.

Residues 1–16 (MGLRIHFVVDPHGWCC) are Cytoplasmic-facing. The chain crosses the membrane as a helical span at residues 17–37 (MGLIVFVWLYNIVLIPKIVLF). Residues 38–44 (PHYEEGH) are Extracellular-facing. Residues 45–65 (IPGILIIIFYGISIFCLVALV) traverse the membrane as a helical segment. The Cytoplasmic portion of the chain corresponds to 66 to 133 (RASITDPGRL…NNCVGEDNHW (68 aa)). The region spanning 90–140 (ELCNKCNLMRPKRSHHCSRCGHCVRRMDHHCPWINNCVGEDNHWLFLQLCF) is the DHHC domain. The active-site S-palmitoyl cysteine intermediate is the Cys120. A helical membrane pass occupies residues 134–154 (LFLQLCFYTELLTCYALMFSF). Residues 155-185 (CHYYYFLPLKKRNLDLFVFRHELAIMRLAAF) are Extracellular-facing. Residues 186-206 (MGITMLVGITGLFYTQLIGII) traverse the membrane as a helical segment. The Cytoplasmic portion of the chain corresponds to 207–265 (TDTTSIEKMSNCCEDISRPRKPWQQTFSEVFGTRWKILWFIPFRQRQPLRVPYHFANHV).

This sequence belongs to the DHHC palmitoyltransferase family. Widely expressed.

It localises to the golgi apparatus membrane. The protein resides in the golgi apparatus. Its subcellular location is the cis-Golgi network membrane. It is found in the cell membrane. It catalyses the reaction L-cysteinyl-[protein] + hexadecanoyl-CoA = S-hexadecanoyl-L-cysteinyl-[protein] + CoA. Palmitoyltransferase that catalyzes the addition of palmitate onto various protein substrates. Palmitoylates sex steroid hormone receptors, including ESR1, PGR and AR, thereby regulating their targeting to the plasma membrane. This affects rapid intracellular signaling by sex hormones via ERK and AKT kinases and the generation of cAMP, but does not affect that mediated by their nuclear receptor. Palmitoylates FYN, regulates its localization in hair follicles and plays a key role in epidermal homeostasis and hair follicle differentiation. Through the palmitoylation of PLCB1 and the regulation of PLCB1 downstream signaling may indirectly regulate the function of the endothelial barrier and the adhesion of leukocytes to the endothelium. Also has a palmitoyltransferase activity toward ADRA1D, positively regulating its activity and expression and may thereby play a role in vascular contraction. May also palmitoylate eNOS and LCK. The protein is Palmitoyltransferase ZDHHC21 of Homo sapiens (Human).